The sequence spans 234 residues: 2-C-methyl-D-erythritol 4-phosphate cytidylyltransferase (234 aa).

Belongs to the IspD/TarI cytidylyltransferase family. IspD subfamily.

The enzyme catalyses 2-C-methyl-D-erythritol 4-phosphate + CTP + H(+) = 4-CDP-2-C-methyl-D-erythritol + diphosphate. The protein operates within isoprenoid biosynthesis; isopentenyl diphosphate biosynthesis via DXP pathway; isopentenyl diphosphate from 1-deoxy-D-xylulose 5-phosphate: step 2/6. Its function is as follows. Catalyzes the formation of 4-diphosphocytidyl-2-C-methyl-D-erythritol from CTP and 2-C-methyl-D-erythritol 4-phosphate (MEP). The chain is 2-C-methyl-D-erythritol 4-phosphate cytidylyltransferase from Desulforamulus reducens (strain ATCC BAA-1160 / DSM 100696 / MI-1) (Desulfotomaculum reducens).